The primary structure comprises 511 residues: MKKRALVSVSDKTGVVEFVKGLLEQGIEVISTGGTKKLLEKNGLQVIGISEVTGFPEIMDGRVKTLHPNIHGGLLAVRDNETHVAQMNELGMEPIDFVIVNLYPFKETIAKPDVTFADAIENIDIGGPTMIRSAAKNHKFVSVIVDPVDYDVVLAELKENGEVKEETKRKLAAKVFRHTAAYDALISNYLTEQMGEESPETLTVTFEKKQDLRYGENPHQKATFYKAPFAVTSSVAYAEQLHGKELSYNNINDADAALSIVKEFTEPAVVAVKHMNPCGVGVGTDIHEAYTRAYEADPVSIFGGIIAANREIDKATAEKLHEIFLEIIIAPSFSKEALEVLQSKKNLRLLTVNIEKATSASKKLTSVQGGLLVQEEDTLSLDESTISIPTKREPSEQEWKDLKLAWKVVKHVKSNAIVLAKDDMTIGVGAGQMNRVGSAKIAITQAGEKAQGSALASDAFFPMPDTVEEAAKAGITAIIQPGGSIRDEDSIKVADTYGIAMVFTGVRHFKH.

Positions 1–145 constitute an MGS-like domain; it reads MKKRALVSVS…KNHKFVSVIV (145 aa).

This sequence belongs to the PurH family.

It carries out the reaction (6R)-10-formyltetrahydrofolate + 5-amino-1-(5-phospho-beta-D-ribosyl)imidazole-4-carboxamide = 5-formamido-1-(5-phospho-D-ribosyl)imidazole-4-carboxamide + (6S)-5,6,7,8-tetrahydrofolate. The enzyme catalyses IMP + H2O = 5-formamido-1-(5-phospho-D-ribosyl)imidazole-4-carboxamide. The protein operates within purine metabolism; IMP biosynthesis via de novo pathway; 5-formamido-1-(5-phospho-D-ribosyl)imidazole-4-carboxamide from 5-amino-1-(5-phospho-D-ribosyl)imidazole-4-carboxamide (10-formyl THF route): step 1/1. It participates in purine metabolism; IMP biosynthesis via de novo pathway; IMP from 5-formamido-1-(5-phospho-D-ribosyl)imidazole-4-carboxamide: step 1/1. The sequence is that of Bifunctional purine biosynthesis protein PurH from Bacillus thuringiensis subsp. konkukian (strain 97-27).